Reading from the N-terminus, the 212-residue chain is Pyridoxine/pyridoxamine 5'-phosphate oxidase (212 aa).

FMN contacts are provided by residues 59 to 64, 74 to 75, Lys81, and Gln103; these read RMVLMK and YS. Lys64 lines the substrate pocket. Substrate is bound by residues Tyr121 and Arg125. FMN is bound by residues 138-139 and Trp183; that span reads QS. 189–191 provides a ligand contact to substrate; the sequence is RLH. FMN is bound at residue Arg193.

Belongs to the pyridoxamine 5'-phosphate oxidase family. In terms of assembly, homodimer. FMN serves as cofactor.

The catalysed reaction is pyridoxamine 5'-phosphate + O2 + H2O = pyridoxal 5'-phosphate + H2O2 + NH4(+). The enzyme catalyses pyridoxine 5'-phosphate + O2 = pyridoxal 5'-phosphate + H2O2. Its pathway is cofactor metabolism; pyridoxal 5'-phosphate salvage; pyridoxal 5'-phosphate from pyridoxamine 5'-phosphate: step 1/1. It participates in cofactor metabolism; pyridoxal 5'-phosphate salvage; pyridoxal 5'-phosphate from pyridoxine 5'-phosphate: step 1/1. Functionally, catalyzes the oxidation of either pyridoxine 5'-phosphate (PNP) or pyridoxamine 5'-phosphate (PMP) into pyridoxal 5'-phosphate (PLP). The protein is Pyridoxine/pyridoxamine 5'-phosphate oxidase of Rhodopseudomonas palustris (strain TIE-1).